Consider the following 635-residue polypeptide: Biosynthetic arginine decarboxylase (635 aa).

An N6-(pyridoxal phosphate)lysine modification is found at lysine 103. 283–293 contacts substrate; that stretch reads FDVGGGLGVDY.

This sequence belongs to the Orn/Lys/Arg decarboxylase class-II family. SpeA subfamily. Requires Mg(2+) as cofactor. It depends on pyridoxal 5'-phosphate as a cofactor.

It catalyses the reaction L-arginine + H(+) = agmatine + CO2. The protein operates within amine and polyamine biosynthesis; agmatine biosynthesis; agmatine from L-arginine: step 1/1. Functionally, catalyzes the biosynthesis of agmatine from arginine. In Proteus mirabilis (strain HI4320), this protein is Biosynthetic arginine decarboxylase.